Here is a 179-residue protein sequence, read N- to C-terminus: 3-hydroxyanthranilate 3,4-dioxygenase (179 aa).

Arginine 47 is an O2 binding site. Residues histidine 51, glutamate 57, and histidine 96 each contribute to the Fe cation site. Substrate is bound at residue glutamate 57. Substrate contacts are provided by arginine 100 and glutamate 110. Cysteine 125, cysteine 128, cysteine 162, and cysteine 165 together coordinate Fe cation.

It belongs to the 3-HAO family. It depends on Fe(2+) as a cofactor.

The enzyme catalyses 3-hydroxyanthranilate + O2 = (2Z,4Z)-2-amino-3-carboxymuconate 6-semialdehyde. Its pathway is cofactor biosynthesis; NAD(+) biosynthesis; quinolinate from L-kynurenine: step 3/3. Its function is as follows. Catalyzes the oxidative ring opening of 3-hydroxyanthranilate to 2-amino-3-carboxymuconate semialdehyde, which spontaneously cyclizes to quinolinate. This chain is 3-hydroxyanthranilate 3,4-dioxygenase, found in Bacillus cereus (strain ATCC 10987 / NRS 248).